A 704-amino-acid chain; its full sequence is Elongation factor G (704 aa).

The 283-residue stretch at 8-290 (ARYRNIGISA…AVIDYLPSPV (283 aa)) folds into the tr-type G domain. Residues 17–24 (AHIDAGKT), 88–92 (DTPGH), and 142–145 (NKMD) each bind GTP. Lys-504 and Lys-643 each carry N6-acetyllysine.

The protein belongs to the TRAFAC class translation factor GTPase superfamily. Classic translation factor GTPase family. EF-G/EF-2 subfamily.

It localises to the cytoplasm. Catalyzes the GTP-dependent ribosomal translocation step during translation elongation. During this step, the ribosome changes from the pre-translocational (PRE) to the post-translocational (POST) state as the newly formed A-site-bound peptidyl-tRNA and P-site-bound deacylated tRNA move to the P and E sites, respectively. Catalyzes the coordinated movement of the two tRNA molecules, the mRNA and conformational changes in the ribosome. This Escherichia coli O17:K52:H18 (strain UMN026 / ExPEC) protein is Elongation factor G.